Reading from the N-terminus, the 733-residue chain is MGNWMPGWSSSGSLGVPPMPVQKLEKSVQVNLEPDEKCLSQTEVSSVPSQKLEEYIQANLKPDEESLKQIDQAVDAISDLLCSEVMIDVLKVVKGGSYGRKTVLRDCSDGTLVLFTGLFKQFQDQKKYQDKLLDLIEQRLKSHEKYKKSVKRKLSLLEVQVSIPGQSILLQLLPTFNPLCISENPSAQVYQNLKRSMDQVKASPGEFSDCFTTLQQRFFEKYPGRLKDLILLVKHWYKQLQDKWIIPSPPPLLYALELLTVYAWEQGCQTKDFDITQGIRTVLQLISQPTNLCVYWLDNYNFEDETVRNNLLHQLNSPRPVILDPTDPTNNVGKDDRFWQLLAEEAQEWLNSLRLNKPHKPCWDVLPMPFFITPSHCLDKFIKDFLQPDKVFLNQIKRAVDIICSFLKETCFQNSDIKVLKIIKGGSTAKGTALQQRSDADIIVFLSSLDSYDSLETERSQYVQEIRKQLEACQKAFNLGVKFDISKWMAPRVLSFTLESKSLKQSVEFDVLPAYDALGQLRSDYTSRLKAYKKLIELYASQDSLKGGEFSVCFTELQRDFIETRPTKLKGLIRLIKHWYKQCERKMKPKASLPPKYALELLTVYAWEHGSGTDGFDTAEGFRTVLDLVIRYRQLCVFWTVNYNFEEDHMRKFLLTQIQKKRPVILDPADPTGDVGGGDRWCWHLLAKEAKEWLSSSCFQVEPKSPVQPWKVPVVQTPGSCGAQIYPVVGGVY.

Residue Gly-2 is the site of N-myristoyl glycine attachment. OAS domain stretches follow at residues 47–365 (VPSQ…CWDV) and 373–713 (TPSH…WKVP). Lys-408 bears the N6-acetyllysine mark. An ATP-binding site is contributed by Ser-427. Mg(2+)-binding residues include Asp-439, Asp-441, and Asp-510. Residues Arg-574 and Lys-577 each contribute to the ATP site.

The protein belongs to the 2-5A synthase family. In terms of assembly, homodimer. The cofactor is Mg(2+). Post-translationally, myristoylation is not essential for its activity. In terms of processing, glycosylated. Glycosylation is essential for its activity.

It localises to the cytoplasm. The protein resides in the perinuclear region. The enzyme catalyses 3 ATP = 5'-triphosphoadenylyl-(2'-&gt;5')-adenylyl-(2'-&gt;5')-adenosine + 2 diphosphate. With respect to regulation, produced as a latent enzyme which is activated by double stranded RNA (dsRNA) generated during the course of viral infection. The dsRNA activator must be at least 15 nucleotides long, and no modification of the 2'-hydroxyl group is tolerated. ssRNA or dsDNA do not act as activators. Strongly inhibited by copper, iron and zinc ions. Partially inhibited by cobalt and nickel ions. Interferon-induced, dsRNA-activated antiviral enzyme which plays a critical role in cellular innate antiviral response. Activated by detection of double stranded RNA (dsRNA): polymerizes higher oligomers of 2'-5'-oligoadenylates (2-5A) from ATP which then bind to the inactive monomeric form of ribonuclease L (RNASEL) leading to its dimerization and subsequent activation. Activation of RNASEL leads to degradation of cellular as well as viral RNA, resulting in the inhibition of protein synthesis, thus terminating viral replication. Can mediate the antiviral effect via the classical RNASEL-dependent pathway or an alternative antiviral pathway independent of RNASEL. In addition, it may also play a role in other cellular processes such as apoptosis, cell growth, differentiation and gene regulation. May act as a negative regulator of lactation, stopping lactation in virally infected mammary gland lobules, thereby preventing transmission of viruses to neonates. Non-infected lobules would not be affected, allowing efficient pup feeding during infection. In Rattus norvegicus (Rat), this protein is 2'-5'-oligoadenylate synthase 2 (Oas2).